A 274-amino-acid chain; its full sequence is Mitochondrial S-adenosylmethionine carrier protein (274 aa).

Solcar repeat units lie at residues 4–77, 86–168, and 177–265; these read PGFT…VKSL, FKPV…LKAL, and VDSW…ARSL. Transmembrane regions (helical) follow at residues 5–25, 49–69, 85–105, 142–162, 182–202, and 238–258; these read GFTA…LILF, IYAG…AFFL, HFKP…ACLI, RGYK…FPLW, SAVC…PLDV, and FAGV…FLGA.

Belongs to the mitochondrial carrier (TC 2.A.29) family.

It is found in the mitochondrion inner membrane. It carries out the reaction S-adenosyl-L-homocysteine(out) + S-adenosyl-L-methionine(in) = S-adenosyl-L-homocysteine(in) + S-adenosyl-L-methionine(out). Functionally, mitochondrial S-adenosyl-L-methionine/S-adenosyl-L-homocysteine antiporter. Mediates the exchange of cytosolic S-adenosyl-L-methionine, the predominant methyl-group donor for macromolecule methylation processes, for mitochondrial S-adenosylhomocysteine(SAH), a by-product of methylation reactions. The sequence is that of Mitochondrial S-adenosylmethionine carrier protein from Mus musculus (Mouse).